The sequence spans 275 residues: MEFWFTEKQTERFGITMKIKRTLHTEKTDFQQLDMVETEEFGNMLLLDGMVMTTEKDEFVYHEMVTHVPLFTHPNPKHVLVVGGGDGGAIREILKHPSVEKATLVDIDGKVIEYSKTYLPTIACALEDERVDVKVADGFMHIAQSANEYDVIMVDSTEPVGPAAKLFERGFYEGISKALKEDGIFVAQTDNPWFHQELVSNVYKDVKEIFPITRLYTANIPTYPSGMWTFTIGSKKHDPLAVEATRFHDVQTKYYTPDIHRAAFVLPKFVQDLLK.

Residues 2–235 enclose the PABS domain; it reads EFWFTEKQTE…GMWTFTIGSK (234 aa). Position 31 (glutamine 31) interacts with S-methyl-5'-thioadenosine. 2 residues coordinate spermidine: histidine 62 and aspartate 86. Residues aspartate 106 and 137 to 138 contribute to the S-methyl-5'-thioadenosine site; that span reads DG. Aspartate 155 (proton acceptor) is an active-site residue. Position 155–158 (155–158) interacts with spermidine; that stretch reads DSTE. S-methyl-5'-thioadenosine is bound at residue proline 162.

Belongs to the spermidine/spermine synthase family. In terms of assembly, homodimer or homotetramer.

The protein localises to the cytoplasm. The catalysed reaction is S-adenosyl 3-(methylsulfanyl)propylamine + putrescine = S-methyl-5'-thioadenosine + spermidine + H(+). Its pathway is amine and polyamine biosynthesis; spermidine biosynthesis; spermidine from putrescine: step 1/1. Functionally, catalyzes the irreversible transfer of a propylamine group from the amino donor S-adenosylmethioninamine (decarboxy-AdoMet) to putrescine (1,4-diaminobutane) to yield spermidine. This Shouchella clausii (strain KSM-K16) (Alkalihalobacillus clausii) protein is Polyamine aminopropyltransferase.